Consider the following 351-residue polypeptide: Protein pelota homolog (351 aa).

It belongs to the eukaryotic release factor 1 family. Pelota subfamily. Monomer. A divalent metal cation serves as cofactor.

It localises to the cytoplasm. Its function is as follows. May function in recognizing stalled ribosomes, interact with stem-loop structures in stalled mRNA molecules, and effect endonucleolytic cleavage of the mRNA. May play a role in the release non-functional ribosomes and degradation of damaged mRNAs. Has endoribonuclease activity. This chain is Protein pelota homolog, found in Methanosphaera stadtmanae (strain ATCC 43021 / DSM 3091 / JCM 11832 / MCB-3).